We begin with the raw amino-acid sequence, 333 residues long: GTPase Obg (333 aa).

The Obg domain occupies 1–159 (MQFIDLAEIH…RHLRLELKLL (159 aa)). Residues 160–328 (AEVGIIGLPN…LLEAVWQELG (169 aa)) enclose the OBG-type G domain. Residues 166-173 (GLPNAGKS), 191-195 (FTTLV), 213-216 (DIPG), 280-283 (NKID), and 309-311 (SAV) contribute to the GTP site. The Mg(2+) site is built by Ser-173 and Thr-193.

The protein belongs to the TRAFAC class OBG-HflX-like GTPase superfamily. OBG GTPase family. In terms of assembly, monomer. Mg(2+) is required as a cofactor.

Its subcellular location is the cytoplasm. An essential GTPase which binds GTP, GDP and possibly (p)ppGpp with moderate affinity, with high nucleotide exchange rates and a fairly low GTP hydrolysis rate. Plays a role in control of the cell cycle, stress response, ribosome biogenesis and in those bacteria that undergo differentiation, in morphogenesis control. The protein is GTPase Obg of Thermosynechococcus vestitus (strain NIES-2133 / IAM M-273 / BP-1).